The chain runs to 259 residues: Snake venom serine protease homolog rhinocerase 2 (259 aa).

A signal peptide spans 1–17; sequence VLIRVLANLLLLQLSYA. A propeptide spanning residues 18–23 is cleaved from the precursor; it reads QESSEL. The Peptidase S1 domain occupies 24 to 250; it reads VIGGDECDIN…YTDWIEGIIA (227 aa). Cystine bridges form between Cys-30–Cys-164, Cys-51–Cys-67, Cys-99–Cys-257, Cys-143–Cys-211, Cys-175–Cys-190, and Cys-201–Cys-226. The N-linked (GlcNAc...) asparagine glycan is linked to Asn-252.

This sequence belongs to the peptidase S1 family. Snake venom subfamily. Expressed by the venom gland.

Its subcellular location is the secreted. Its function is as follows. Snake venom serine protease homolog that may act in the hemostasis system of the prey. The chain is Snake venom serine protease homolog rhinocerase 2 from Bitis rhinoceros (West African gaboon viper).